A 128-amino-acid polypeptide reads, in one-letter code: Large ribosomal subunit protein bL12 (128 aa).

Residues G97–K128 form a disordered region. The segment covering G105–L118 has biased composition (basic and acidic residues).

This sequence belongs to the bacterial ribosomal protein bL12 family. Homodimer. Part of the ribosomal stalk of the 50S ribosomal subunit. Forms a multimeric L10(L12)X complex, where L10 forms an elongated spine to which 2 to 4 L12 dimers bind in a sequential fashion. Binds GTP-bound translation factors.

Functionally, forms part of the ribosomal stalk which helps the ribosome interact with GTP-bound translation factors. Is thus essential for accurate translation. This chain is Large ribosomal subunit protein bL12, found in Lawsonia intracellularis (strain PHE/MN1-00).